Reading from the N-terminus, the 119-residue chain is Putative F420H(2)-dependent quinone reductase Rv3178 (119 aa).

Coenzyme F420-(gamma-Glu)n contacts are provided by residues 21 to 23 (RKS), 27 to 32 (FVAPLL), 43 to 46 (VASA), and 54 to 58 (QWYRN).

It belongs to the F420H(2)-dependent quinone reductase family.

It localises to the cell membrane. The catalysed reaction is oxidized coenzyme F420-(gamma-L-Glu)(n) + a quinol + H(+) = reduced coenzyme F420-(gamma-L-Glu)(n) + a quinone. Involved in a F420-dependent anti-oxidant mechanism that protects M.tuberculosis against oxidative stress and bactericidal agents. Catalyzes the F420H(2)-dependent two-electron reduction of quinones to dihydroquinones, thereby preventing the formation of cytotoxic semiquinones obtained by the one-electron reduction pathway. Since menaquinone is the sole quinone electron carrier in the respiratory chain in M.tuberculosis, the physiological electron acceptor for Fqr-mediated F420H(2) oxidation is therefore likely to be the endogenous menaquinone found in the membrane fraction of M.tuberculosis. The polypeptide is Putative F420H(2)-dependent quinone reductase Rv3178 (Mycobacterium tuberculosis (strain ATCC 25618 / H37Rv)).